Here is a 419-residue protein sequence, read N- to C-terminus: Homeobox-containing protein 1 (419 aa).

The HNF-p1 domain occupies 18-49; the sequence is DEPRFTIEQIDLLQRLRRTGMTKHEILHALET. The tract at residues 56 to 152 is disordered; it reads EHSDKFGRRS…GQRSYSFEAS (97 aa). Lysine 60 is covalently cross-linked (Glycyl lysine isopeptide (Lys-Gly) (interchain with G-Cter in SUMO2)). Composition is skewed to low complexity over residues 64-73 and 81-93; these read RSSYGGSSYG and ASSS…TQTQ. Positions 94-132 are enriched in polar residues; sequence HSGMSPSPSNSYDTSPLPCTTNQNGRENNDRLSTSNGKM. A Glycyl lysine isopeptide (Lys-Gly) (interchain with G-Cter in SUMO2) cross-link involves residue lysine 131. One can recognise a POU-specific atypical domain in the interval 145 to 241; that stretch reads RSYSFEASEE…PGATLSMRPA (97 aa). Residue serine 148 is modified to Phosphoserine. A Glycyl lysine isopeptide (Lys-Gly) (interchain with G-Cter in SUMO2) cross-link involves residue lysine 161. At serine 170 the chain carries Phosphoserine. Residues lysine 174, lysine 217, and lysine 310 each participate in a glycyl lysine isopeptide (Lys-Gly) (interchain with G-Cter in SUMO2) cross-link. Residues 267 to 341 constitute a DNA-binding region (homeobox); that stretch reads RRGSRFTWRK…NRRKEIKRRA (75 aa). The interval 352–384 is disordered; sequence IDVQSPGGHSNSDDVDGNDYSEQDDSTSHSDHQ. Positions 364–376 are enriched in acidic residues; sequence DDVDGNDYSEQDD. A Glycyl lysine isopeptide (Lys-Gly) (interchain with G-Cter in SUMO1); alternate cross-link involves residue lysine 412. A Glycyl lysine isopeptide (Lys-Gly) (interchain with G-Cter in SUMO2); alternate cross-link involves residue lysine 412.

As to quaternary structure, associates with the telomerase holoenzyme complex. Interacts with DKC1, XRCC6 and COIL.

The protein resides in the nucleus. It is found in the cytoplasm. The protein localises to the chromosome. It localises to the telomere. Its subcellular location is the cajal body. The protein resides in the PML body. Functionally, binds directly to 5'-TTAGGG-3' repeats in telomeric DNA. Associates with the telomerase complex at sites of active telomere processing and positively regulates telomere elongation. Important for TERT binding to chromatin, indicating a role in recruitment of the telomerase complex to telomeres. Also plays a role in the alternative lengthening of telomeres (ALT) pathway in telomerase-negative cells where it promotes formation and/or maintenance of ALT-associated promyelocytic leukemia bodies (APBs). Enhances formation of telomere C-circles in ALT cells, suggesting a possible role in telomere recombination. Might also be involved in the DNA damage response at telomeres. This chain is Homeobox-containing protein 1 (Hmbox1), found in Mus musculus (Mouse).